We begin with the raw amino-acid sequence, 317 residues long: Aspartate carbamoyltransferase catalytic subunit (317 aa).

Arg64 and Thr65 together coordinate carbamoyl phosphate. Lys92 is an L-aspartate binding site. The carbamoyl phosphate site is built by Arg114, His142, and Gln145. Residues Arg176 and Arg230 each coordinate L-aspartate. Gly271 and Pro272 together coordinate carbamoyl phosphate.

The protein belongs to the aspartate/ornithine carbamoyltransferase superfamily. ATCase family. As to quaternary structure, heterododecamer (2C3:3R2) of six catalytic PyrB chains organized as two trimers (C3), and six regulatory PyrI chains organized as three dimers (R2).

The enzyme catalyses carbamoyl phosphate + L-aspartate = N-carbamoyl-L-aspartate + phosphate + H(+). It functions in the pathway pyrimidine metabolism; UMP biosynthesis via de novo pathway; (S)-dihydroorotate from bicarbonate: step 2/3. Catalyzes the condensation of carbamoyl phosphate and aspartate to form carbamoyl aspartate and inorganic phosphate, the committed step in the de novo pyrimidine nucleotide biosynthesis pathway. This is Aspartate carbamoyltransferase catalytic subunit from Nitratidesulfovibrio vulgaris (strain ATCC 29579 / DSM 644 / CCUG 34227 / NCIMB 8303 / VKM B-1760 / Hildenborough) (Desulfovibrio vulgaris).